The following is a 272-amino-acid chain: Probable protein VP2 (272 aa).

Disordered regions lie at residues 50 to 116 and 195 to 272; these read GGSR…DFAD and YSPA…SSSS. The segment covering 78-90 has biased composition (pro residues); it reads APDPPAGNQPPAL. Over residues 94–108 the composition is skewed to gly residues; the sequence is GDGGNESGAGGGESG. Basic and acidic residues predominate over residues 218 to 230; it reads SKRDNKENRDRGR. The segment covering 231–246 has biased composition (basic residues); the sequence is AKARAKQKPKKRRRRA. Residues 249–272 show a composition bias toward low complexity; the sequence is ESSSSSSSKSSFNSEEGSSASSSS.

Phosphorylated at C-terminal serines.

In Homo sapiens (Human), this protein is Probable protein VP2.